Consider the following 226-residue polypeptide: Urease accessory protein UreF (226 aa).

This sequence belongs to the UreF family. In terms of assembly, ureD, UreF and UreG form a complex that acts as a GTP-hydrolysis-dependent molecular chaperone, activating the urease apoprotein by helping to assemble the nickel containing metallocenter of UreC. The UreE protein probably delivers the nickel.

The protein resides in the cytoplasm. Functionally, required for maturation of urease via the functional incorporation of the urease nickel metallocenter. This chain is Urease accessory protein UreF, found in Burkholderia mallei (strain NCTC 10247).